A 190-amino-acid chain; its full sequence is ADP-ribosylation factor F (190 aa).

Residues 34–40, 75–79, and 136–139 each bind GTP; these read DGAGKST, DIGGQ, and NKQD.

This sequence belongs to the small GTPase superfamily. Arf family.

It is found in the golgi apparatus. Functionally, GTP-binding protein that may be involved in protein trafficking. May modulate vesicle budding and uncoating within the Golgi apparatus. This is ADP-ribosylation factor F (arrF) from Dictyostelium discoideum (Social amoeba).